Consider the following 148-residue polypeptide: Large ribosomal subunit protein bL9 (148 aa).

It belongs to the bacterial ribosomal protein bL9 family.

Functionally, binds to the 23S rRNA. This chain is Large ribosomal subunit protein bL9, found in Aliarcobacter butzleri (strain RM4018) (Arcobacter butzleri).